A 459-amino-acid chain; its full sequence is MLKLYNSLTRQKEEFKPIQPGKVGMYVCGVTIYDLCHIGHGRTFVAFDMIVRYLRYIGYDVNFHRNITDVDDKIIKRATENGESCDALTERLTQEMYHDFDALNMKRPDFEPRATQHMPEIIEMVERLLERDHAYIADNGDVLFSVASFPEYGRLSGQNLDQLQAGARVEVDENKRDPMDFVLWKMSKPGEPTWDSPWGPGRPGWHIECSAMNSKHLGEHFDIHGGGSDLQFPHHENEIAQSCCAHDTPYVNYWMHTGMVMVDKEKMSKSLNNFFTIRDVLAHYDASTVRYFLLSGHYRSQLNYSEDNLKQAKAALERLYTALKGLDLSVEAAPASEYVAKFKEAMDDDFNTPEAYSVLFDMAREINRLKVDDLAAASALGVSMKQLGDVLGILEQDVDGFFKGEGSDDEVAQIEALIAERNRARTEKDWAAADVARDGLNALGVILEDGPEGTTWRKK.

C28 provides a ligand contact to Zn(2+). A 'HIGH' region motif is present at residues 30-40 (VTIYDLCHIGH). 3 residues coordinate Zn(2+): C209, H234, and E238. The short motif at 266–270 (KMSKS) is the 'KMSKS' region element. An ATP-binding site is contributed by K269.

The protein belongs to the class-I aminoacyl-tRNA synthetase family. As to quaternary structure, monomer. Requires Zn(2+) as cofactor.

It is found in the cytoplasm. The catalysed reaction is tRNA(Cys) + L-cysteine + ATP = L-cysteinyl-tRNA(Cys) + AMP + diphosphate. The polypeptide is Cysteine--tRNA ligase (Shewanella loihica (strain ATCC BAA-1088 / PV-4)).